The following is a 138-amino-acid chain: Large ribosomal subunit protein bL19 (138 aa).

This sequence belongs to the bacterial ribosomal protein bL19 family.

Functionally, this protein is located at the 30S-50S ribosomal subunit interface and may play a role in the structure and function of the aminoacyl-tRNA binding site. In Rickettsia rickettsii (strain Iowa), this protein is Large ribosomal subunit protein bL19.